A 547-amino-acid polypeptide reads, in one-letter code: Chaperonin GroEL (547 aa).

Residues 30–33, Lys51, 87–91, Gly415, and Asp495 each bind ATP; these read TLGP and DGTTT.

This sequence belongs to the chaperonin (HSP60) family. Forms a cylinder of 14 subunits composed of two heptameric rings stacked back-to-back. Interacts with the co-chaperonin GroES.

Its subcellular location is the cytoplasm. It catalyses the reaction ATP + H2O + a folded polypeptide = ADP + phosphate + an unfolded polypeptide.. Functionally, together with its co-chaperonin GroES, plays an essential role in assisting protein folding. The GroEL-GroES system forms a nano-cage that allows encapsulation of the non-native substrate proteins and provides a physical environment optimized to promote and accelerate protein folding. This Pasteurella multocida (strain Pm70) protein is Chaperonin GroEL.